Here is a 237-residue protein sequence, read N- to C-terminus: NAD-dependent protein deacetylase (237 aa).

The region spanning 1–237 is the Deacetylase sirtuin-type domain; sequence MLTTWLTEAK…LEETNRALQA (237 aa). NAD(+) contacts are provided by Ala-18, Thr-22, Phe-29, Arg-30, Gln-95, Asp-98, and His-113. Residue Phe-29 coordinates nicotinamide. Asp-98 provides a ligand contact to nicotinamide. The Proton acceptor role is filled by His-113. Zn(2+) is bound by residues Cys-121, Cys-124, Cys-140, and Cys-142. Residues Ser-180, Ser-181, Asn-205, and Ile-224 each contribute to the NAD(+) site.

It belongs to the sirtuin family. Class U subfamily. Zn(2+) serves as cofactor.

Its subcellular location is the cytoplasm. It catalyses the reaction N(6)-acetyl-L-lysyl-[protein] + NAD(+) + H2O = 2''-O-acetyl-ADP-D-ribose + nicotinamide + L-lysyl-[protein]. Functionally, NAD-dependent protein deacetylase which modulates the activities of several enzymes which are inactive in their acetylated form. This Halalkalibacterium halodurans (strain ATCC BAA-125 / DSM 18197 / FERM 7344 / JCM 9153 / C-125) (Bacillus halodurans) protein is NAD-dependent protein deacetylase.